Consider the following 1035-residue polypeptide: Protein hir-1 (1035 aa).

WD repeat units lie at residues 15-54, 68-107, 129-168, 171-210, 232-275, 299-338, and 342-383; these read QKDF…NSHD, HHLG…PSHT, GHDN…KLKT, VHQS…PNAT, PLTT…SEIN, DENS…PVLI, and IASK…WVAK. The segment at 393 to 479 is disordered; that stretch reads KYGGSRKGMG…PEEESADKTA (87 aa). The span at 408–425 shows a compositional bias: basic and acidic residues; sequence DGLHLENHSKEKELRGAE.

This sequence belongs to the WD repeat HIR1 family.

The protein resides in the nucleus. Required for replication-independent chromatin assembly and for the periodic repression of histone gene transcription during the cell cycle. This chain is Protein hir-1 (hir-1), found in Neurospora crassa (strain ATCC 24698 / 74-OR23-1A / CBS 708.71 / DSM 1257 / FGSC 987).